Here is a 282-residue protein sequence, read N- to C-terminus: Transmembrane protein 41B (282 aa).

The tract at residues 1–36 (MAKKRAGNRETESSPLVEQEPRPSKETPVPKGAQSP) is disordered. 6 consecutive transmembrane segments (helical) span residues 43–63 (MSILLLVVIFACSACVMYLVF), 102–122 (TQVLLAYFATYIFLQTFAIPG), 138–160 (LALFLVCLCSGLGASFCYMLSYL), 188–208 (LINYIIFLRITPFLPNWFINI), 216–236 (PLGVFFLGTFLGVAPPSFVAI), and 251–271 (AVSWNSLLVLGVLAVVSILPV). Positions 131 to 242 (GYLYPFPLAL…FVAINAGTTL (112 aa)) are VTT domain; required for its function in autophagy.

Belongs to the TMEM41 family.

It is found in the endoplasmic reticulum membrane. The protein localises to the endomembrane system. The enzyme catalyses a 1,2-diacyl-sn-glycero-3-phospho-L-serine(in) = a 1,2-diacyl-sn-glycero-3-phospho-L-serine(out). It catalyses the reaction cholesterol(in) = cholesterol(out). It carries out the reaction a 1,2-diacyl-sn-glycero-3-phosphocholine(in) = a 1,2-diacyl-sn-glycero-3-phosphocholine(out). The catalysed reaction is a 1,2-diacyl-sn-glycero-3-phosphoethanolamine(in) = a 1,2-diacyl-sn-glycero-3-phosphoethanolamine(out). Phospholipid scramblase involved in lipid homeostasis and membrane dynamics processes. Has phospholipid scramblase activity toward cholesterol and phosphatidylserine, as well as phosphatidylethanolamine and phosphatidylcholine. Required for autophagosome formation: participates in early stages of autophagosome biogenesis at the endoplasmic reticulum (ER) membrane by reequilibrating the leaflets of the ER as lipids are extracted by atg2 (atg2a or atg2b) to mediate autophagosome assembly. In addition to autophagy, involved in other processes in which phospholipid scramblase activity is required. Required for normal motor neuron development. This is Transmembrane protein 41B from Danio rerio (Zebrafish).